Consider the following 557-residue polypeptide: Putative sensory transducer protein (557 aa).

Residues 122 to 145 (TASTVMIVVIFVGILIAIALGVFI) traverse the membrane as a helical segment. In terms of domain architecture, HAMP spans 147–199 (RIISKPIGQMVEAADRLALGDVEVDVKAETRDEIGKLAESFKRMIENIREQAY). Positions 243-472 (VAAQVAAGAK…ESAAASEELS (230 aa)) constitute a Methyl-accepting transducer domain. A Glutamate methyl ester (Gln) modification is found at Q268. The residue at position 274 (E274) is a Glutamate methyl ester (Glu). Q281 bears the Glutamate methyl ester (Gln) mark. A Glutamate methyl ester (Glu) modification is found at E463. The span at 511–541 (DYTENKQPKSYSKEENGEYSDGKETAEKDVG) shows a compositional bias: basic and acidic residues. The disordered stretch occupies residues 511 to 542 (DYTENKQPKSYSKEENGEYSDGKETAEKDVGG).

The protein belongs to the methyl-accepting chemotaxis (MCP) protein family.

Its subcellular location is the cell membrane. Functionally, may bind attractants or detect changes in the extracellular concentration of soluble sugars. This Acetivibrio thermocellus (strain ATCC 27405 / DSM 1237 / JCM 9322 / NBRC 103400 / NCIMB 10682 / NRRL B-4536 / VPI 7372) (Clostridium thermocellum) protein is Putative sensory transducer protein.